Consider the following 365-residue polypeptide: Probable 7-methylxanthine methyltransferase 4 (365 aa).

Residue Y18 participates in S-adenosyl-L-homocysteine binding. Residue T25 coordinates theobromine. S-adenosyl-L-homocysteine-binding residues include C62, Q67, D99, L100, S132, and F133. The theobromine site is built by Y150, H153, and W154. Residues N170, D256, F258, and N259 each coordinate Mg(2+). F311 contacts theobromine.

It belongs to the methyltransferase superfamily. Type-7 methyltransferase family. It depends on Mg(2+) as a cofactor.

It carries out the reaction 7-methylxanthine + S-adenosyl-L-methionine = theobromine + S-adenosyl-L-homocysteine + H(+). The protein operates within alkaloid biosynthesis. Involved in the biosynthesis of theobromine. The chain is Probable 7-methylxanthine methyltransferase 4 from Theobroma cacao (Cacao).